Reading from the N-terminus, the 122-residue chain is Large ribosomal subunit protein uL14 (122 aa).

Belongs to the universal ribosomal protein uL14 family. Part of the 50S ribosomal subunit. Forms a cluster with proteins L3 and L19. In the 70S ribosome, L14 and L19 interact and together make contacts with the 16S rRNA in bridges B5 and B8.

Functionally, binds to 23S rRNA. Forms part of two intersubunit bridges in the 70S ribosome. The chain is Large ribosomal subunit protein uL14 from Ureaplasma parvum serovar 3 (strain ATCC 27815 / 27 / NCTC 11736).